The chain runs to 253 residues: 3-deoxy-manno-octulosonate cytidylyltransferase (253 aa).

Belongs to the KdsB family.

It localises to the cytoplasm. It carries out the reaction 3-deoxy-alpha-D-manno-oct-2-ulosonate + CTP = CMP-3-deoxy-beta-D-manno-octulosonate + diphosphate. Its pathway is nucleotide-sugar biosynthesis; CMP-3-deoxy-D-manno-octulosonate biosynthesis; CMP-3-deoxy-D-manno-octulosonate from 3-deoxy-D-manno-octulosonate and CTP: step 1/1. It participates in bacterial outer membrane biogenesis; lipopolysaccharide biosynthesis. Activates KDO (a required 8-carbon sugar) for incorporation into bacterial lipopolysaccharide in Gram-negative bacteria. This is 3-deoxy-manno-octulosonate cytidylyltransferase from Proteus mirabilis (strain HI4320).